Consider the following 291-residue polypeptide: ATP synthase gamma chain (291 aa).

This sequence belongs to the ATPase gamma chain family. In terms of assembly, F-type ATPases have 2 components, CF(1) - the catalytic core - and CF(0) - the membrane proton channel. CF(1) has five subunits: alpha(3), beta(3), gamma(1), delta(1), epsilon(1). CF(0) has three main subunits: a, b and c.

The protein localises to the cell inner membrane. Its function is as follows. Produces ATP from ADP in the presence of a proton gradient across the membrane. The gamma chain is believed to be important in regulating ATPase activity and the flow of protons through the CF(0) complex. In Ralstonia nicotianae (strain ATCC BAA-1114 / GMI1000) (Ralstonia solanacearum), this protein is ATP synthase gamma chain.